The following is a 428-amino-acid chain: 3-phosphoshikimate 1-carboxyvinyltransferase (428 aa).

3-phosphoshikimate contacts are provided by lysine 21, serine 22, and arginine 26. Phosphoenolpyruvate is bound at residue lysine 21. Glycine 91 and arginine 119 together coordinate phosphoenolpyruvate. Serine 164, glutamine 166, aspartate 313, and lysine 340 together coordinate 3-phosphoshikimate. Glutamine 166 provides a ligand contact to phosphoenolpyruvate. Catalysis depends on aspartate 313, which acts as the Proton acceptor. Positions 344 and 386 each coordinate phosphoenolpyruvate.

The protein belongs to the EPSP synthase family. Monomer.

Its subcellular location is the cytoplasm. It carries out the reaction 3-phosphoshikimate + phosphoenolpyruvate = 5-O-(1-carboxyvinyl)-3-phosphoshikimate + phosphate. The protein operates within metabolic intermediate biosynthesis; chorismate biosynthesis; chorismate from D-erythrose 4-phosphate and phosphoenolpyruvate: step 6/7. Catalyzes the transfer of the enolpyruvyl moiety of phosphoenolpyruvate (PEP) to the 5-hydroxyl of shikimate-3-phosphate (S3P) to produce enolpyruvyl shikimate-3-phosphate and inorganic phosphate. The protein is 3-phosphoshikimate 1-carboxyvinyltransferase of Campylobacter jejuni subsp. jejuni serotype O:6 (strain 81116 / NCTC 11828).